A 562-amino-acid polypeptide reads, in one-letter code: 3-(3-hydroxy-phenyl)propionate/3-hydroxycinnamic acid hydroxylase (562 aa).

FAD-binding positions include 8–37 and 275–285; these read DVVI…IIEE and FRKGRMLLAGD.

The protein belongs to the PheA/TfdB FAD monooxygenase family. Requires FAD as cofactor.

The catalysed reaction is 3-(3-hydroxyphenyl)propanoate + NADH + O2 + H(+) = 3-(2,3-dihydroxyphenyl)propanoate + NAD(+) + H2O. The enzyme catalyses (2E)-3-(3-hydroxyphenyl)prop-2-enoate + NADH + O2 + H(+) = (2E)-3-(2,3-dihydroxyphenyl)prop-2-enoate + NAD(+) + H2O. The protein operates within aromatic compound metabolism; 3-phenylpropanoate degradation. Catalyzes the insertion of one atom of molecular oxygen into position 2 of the phenyl ring of 3-(3-hydroxyphenyl)propionate (3-HPP) and hydroxycinnamic acid (3HCI). The protein is 3-(3-hydroxy-phenyl)propionate/3-hydroxycinnamic acid hydroxylase of Mycolicibacterium smegmatis (strain ATCC 700084 / mc(2)155) (Mycobacterium smegmatis).